Reading from the N-terminus, the 90-residue chain is Large ribosomal subunit protein bL27 (90 aa).

The segment at 1-22 (MAHKKAGGSSRNGRDSESKRLG) is disordered.

It belongs to the bacterial ribosomal protein bL27 family.

The protein is Large ribosomal subunit protein bL27 of Allorhizobium ampelinum (strain ATCC BAA-846 / DSM 112012 / S4) (Agrobacterium vitis (strain S4)).